Reading from the N-terminus, the 988-residue chain is Voltage-gated delayed rectifier potassium channel KCNH5 (988 aa).

Topologically, residues 1–217 (MPGGKRGLVA…LHYCAFKTTW (217 aa)) are cytoplasmic. The PAS domain maps to 14 to 86 (TFLENIVRRS…TIEKVRQTFD (73 aa)). The 53-residue stretch at 91 to 143 (NCFEVLLYKKNRTPVWFYMQIAPIRNEHEKVVLFLCTFKDITLFKQPIEDDST) folds into the PAC domain. The helical transmembrane segment at 218-238 (DWVILILTFYTAIMVPYNVSF) threads the bilayer. Over 239–243 (KTKQN) the chain is Extracellular. A helical transmembrane segment spans residues 244 to 264 (NIAWLVLDSVVDVIFLVDIVL). The Cytoplasmic segment spans residues 265-291 (NFHTTFVGPGGEVISDPKLIRMNYLKT). The helical transmembrane segment at 292–312 (WFVIDLLSCLPYDIINAFENV) threads the bilayer. Topologically, residues 313–319 (DEGISSL) are extracellular. Residues 320 to 340 (FSSLKVVRLLRLGRVARKLDH) form a helical; Voltage-sensor membrane-spanning segment. The Cytoplasmic portion of the chain corresponds to 341-346 (YLEYGA). A helical membrane pass occupies residues 347–367 (AVLVLLVCVFGLVAHWLACIW). Residues 368–419 (YSIGDYEVIDEVTNTIQIDSWLYQLALSIGTPYRYNTSAGIWEGGPSKDSLY) are Extracellular-facing. Asparagine 403 carries an N-linked (GlcNAc...) asparagine glycan. The pore-forming intramembrane region spans 420–440 (VSSLYFTMTSLTTIGFGNIAP). Positions 432–437 (TIGFGN) match the Selectivity filter motif. Residues 441-446 (TTDVEK) lie on the Extracellular side of the membrane. Residues 447 to 467 (MFSVAMMMVGSLLYATIFGNV) traverse the membrane as a helical segment. The Cytoplasmic segment spans residues 468-988 (TTIFQQMYAN…PESDKDEINF (521 aa)). 550-667 (AFRLASDGCL…NSFSRNLTLT (118 aa)) lines the a nucleoside 3',5'-cyclic phosphate pocket. The tract at residues 704–715 (HPVRKLFQKFKQ) is calmodulin-binding. A disordered region spans residues 718-742 (ELRNQGSAQSDPERSQLQVESRPLQ). Positions 721 to 742 (NQGSAQSDPERSQLQVESRPLQ) are enriched in polar residues. Lysine 785 is covalently cross-linked (Glycyl lysine isopeptide (Lys-Gly) (interchain with G-Cter in ubiquitin)). Disordered regions lie at residues 839–897 (LLSE…AKHP) and 946–965 (SVPQ…PPQI). The span at 871 to 885 (SDLRLDKAGEARSPL) shows a compositional bias: basic and acidic residues. Serine 883 carries the post-translational modification Phosphoserine. The CAD (involved in subunit assembly) stretch occupies residues 909-948 (TLQEVKHELKEDIQLLSCRMTALEKQVAEILKLLSEKSVP).

Belongs to the potassium channel family. H (Eag) (TC 1.A.1.20) subfamily. Kv10.2/KCNH5 sub-subfamily. In terms of assembly, homotetramer. The potassium channel is probably composed of a homo- or heterotetrameric complex of pore-forming alpha subunits that can associate with modulating beta subunits. Heteromultimer with KCNH1/EAG. In terms of tissue distribution, detected in adult testis and in embryonic and adult brain, but not in other tissues. Highly expressed in specific brain areas, such as neocortex, olfactory bulb, primary olfactory cortex and brain stem. In cortex, expression is concentrated in a narrow band toward the middle lamella (layer IV). Moderately expressed in spinal cord, dorsal thalamic nuclei, medial hypothalamus, colliculus, lateral lemniscus, pontine nuclei and Islands of Calleja.

It is found in the membrane. It carries out the reaction K(+)(in) = K(+)(out). With respect to regulation, inhibited by low nanomolar concentrations of cytosolic calcium. Its function is as follows. Pore-forming (alpha) subunit of a voltage-gated delayed rectifier potassium channel that mediates outward-rectifying potassium currents which, on depolarization, reaches a steady-state level and do not inactivate. The kinetic is characterized by a slow activation time course and a small voltage dependence of the activation time constants, therefore, starts to open at more negative voltages. The activation kinetics depend on the prepulse potential and external divalent cation concentration. The time course of activation is biphasic with a fast and a slowly activating current component. With negative prepulses, the current activation is delayed and slowed down several fold, whereas more positive prepulses speed up activation, therefore the activation rate depends on holding potential. This Rattus norvegicus (Rat) protein is Voltage-gated delayed rectifier potassium channel KCNH5.